We begin with the raw amino-acid sequence, 469 residues long: Arginine biosynthesis bifunctional protein ArgJ, mitochondrial (469 aa).

Substrate contacts are provided by Thr-199, Lys-228, Thr-239, Glu-325, Asn-464, and Thr-469. The active-site Nucleophile is the Thr-239.

It belongs to the ArgJ family. In terms of assembly, heterodimer of an alpha and a beta chain. In terms of processing, the alpha and beta chains are autoproteolytically processed from a single precursor protein within the mitochondrion.

The protein resides in the mitochondrion matrix. The catalysed reaction is N(2)-acetyl-L-ornithine + L-glutamate = N-acetyl-L-glutamate + L-ornithine. The enzyme catalyses L-glutamate + acetyl-CoA = N-acetyl-L-glutamate + CoA + H(+). It participates in amino-acid biosynthesis; L-arginine biosynthesis; L-ornithine and N-acetyl-L-glutamate from L-glutamate and N(2)-acetyl-L-ornithine (cyclic): step 1/1. The protein operates within amino-acid biosynthesis; L-arginine biosynthesis; N(2)-acetyl-L-ornithine from L-glutamate: step 1/4. Its function is as follows. Catalyzes two activities which are involved in the cyclic version of arginine biosynthesis: the synthesis of acetylglutamate from glutamate and acetyl-CoA, and of ornithine by transacetylation between acetylornithine and glutamate. The polypeptide is Arginine biosynthesis bifunctional protein ArgJ, mitochondrial (Sordaria macrospora (strain ATCC MYA-333 / DSM 997 / K(L3346) / K-hell)).